A 261-amino-acid chain; its full sequence is Cytochrome c oxidase subunit 3 (261 aa).

Topologically, residues 1 to 15 (MTRQTHAYHMVNPSP) are mitochondrial matrix. Residues 16–34 (WPLTGALSALLMTSGLIMW) form a helical membrane-spanning segment. Topologically, residues 35–40 (FHFNST) are mitochondrial intermembrane. A helical transmembrane segment spans residues 41-66 (ILLMLGLTTNMLTMYQWWRDVIREST). Over 67–72 (FQGHHT) the chain is Mitochondrial matrix. Residues 73–105 (PNVQKGLRYGMILFIISEVLFFTGFFWAFYHSS) form a helical membrane-spanning segment. The Mitochondrial intermembrane portion of the chain corresponds to 106-128 (LAPTPELGGCWPPTGIHPLNPLE). A helical membrane pass occupies residues 129–152 (VPLLNTSVLLASGVSITWAHHSLM). Residues 153-155 (EGN) are Mitochondrial matrix-facing. A helical membrane pass occupies residues 156-183 (RNHMLQALFITIALGVYFTLLQASEYYE). The Mitochondrial intermembrane segment spans residues 184–190 (APFTISD). Residues 191–223 (GVYGSTFFVATGFHGLHVIIGSTFLIVCFFRQL) form a helical membrane-spanning segment. Residues 224 to 232 (KFHFTSNHH) lie on the Mitochondrial matrix side of the membrane. A helical transmembrane segment spans residues 233–256 (FGFEAAAWYWHFVDVVWLFLYVSI). Topologically, residues 257 to 261 (YWWGS) are mitochondrial intermembrane.

The protein belongs to the cytochrome c oxidase subunit 3 family. Component of the cytochrome c oxidase (complex IV, CIV), a multisubunit enzyme composed of 14 subunits. The complex is composed of a catalytic core of 3 subunits MT-CO1, MT-CO2 and MT-CO3, encoded in the mitochondrial DNA, and 11 supernumerary subunits COX4I, COX5A, COX5B, COX6A, COX6B, COX6C, COX7A, COX7B, COX7C, COX8 and NDUFA4, which are encoded in the nuclear genome. The complex exists as a monomer or a dimer and forms supercomplexes (SCs) in the inner mitochondrial membrane with NADH-ubiquinone oxidoreductase (complex I, CI) and ubiquinol-cytochrome c oxidoreductase (cytochrome b-c1 complex, complex III, CIII), resulting in different assemblies (supercomplex SCI(1)III(2)IV(1) and megacomplex MCI(2)III(2)IV(2)).

The protein localises to the mitochondrion inner membrane. The catalysed reaction is 4 Fe(II)-[cytochrome c] + O2 + 8 H(+)(in) = 4 Fe(III)-[cytochrome c] + 2 H2O + 4 H(+)(out). Functionally, component of the cytochrome c oxidase, the last enzyme in the mitochondrial electron transport chain which drives oxidative phosphorylation. The respiratory chain contains 3 multisubunit complexes succinate dehydrogenase (complex II, CII), ubiquinol-cytochrome c oxidoreductase (cytochrome b-c1 complex, complex III, CIII) and cytochrome c oxidase (complex IV, CIV), that cooperate to transfer electrons derived from NADH and succinate to molecular oxygen, creating an electrochemical gradient over the inner membrane that drives transmembrane transport and the ATP synthase. Cytochrome c oxidase is the component of the respiratory chain that catalyzes the reduction of oxygen to water. Electrons originating from reduced cytochrome c in the intermembrane space (IMS) are transferred via the dinuclear copper A center (CU(A)) of subunit 2 and heme A of subunit 1 to the active site in subunit 1, a binuclear center (BNC) formed by heme A3 and copper B (CU(B)). The BNC reduces molecular oxygen to 2 water molecules using 4 electrons from cytochrome c in the IMS and 4 protons from the mitochondrial matrix. This Eudorcas rufifrons (Red-fronted gazelle) protein is Cytochrome c oxidase subunit 3 (MT-CO3).